The sequence spans 577 residues: MWARDKCSVPQLEMDSRYTSATGIGDLNQLSAAIPATRVEVSVSCRNLLDRDTFSKSDPICVLYTQAVGNKEWREFGRTEVIDNTLNPDFVRKFILDYFFEERENLRFDLYDVDSKSPNLSKHDFLGQVFCTLGEIVGSQGSRLEKPIVGIPGRKCGTIILTAEELNCCRDAVLMQFCANKLDKKDFFGKSDPFLVFYRSNEDGSFTICHKTEVVKNTLNPVWQAFKISVRALCNGDYDRTIKVEVYDWDRDGSHDFIGEFTTSYRELARGQSQFNVYEVVNPKKKGKKKKYTNSGTVTLLSFLVETEVSFLDYIKGGTQINFTVAIDFTASNGNPAQPTSLHYMNPYQLNAYGMALKAVGEIVQDYDSDKMFPALGFGAKLPPDGRISHEFALNGNPQNPYCDGIEGVMEAYYRSLKSVQLYGPTNFAPVINHVARYASSVKDGSQYFVLLIVTDGVISDMAQTKESIVNASKLPMSIIIVGVGPAEFDAMVELDGDDVRVSSRGKYAERDIVQFVPFRDYIDRSGNHILSMARLAKDVLAEIPEQFLSYMRARGIKPSPAPPPYTPPTHVLQTQI.

C2 domains lie at 19 to 146 and 155 to 278; these read TSAT…RLEK and KCGT…FNVY. Residues Asp-52, Asp-58, Asp-112, Asp-114, Ser-117, Lys-122, Asp-124, Asp-186, Asp-192, Asp-248, Asp-250, and Asp-256 each coordinate Ca(2+). Ser-273 carries the post-translational modification Phosphoserine. The VWFA domain maps to 322–523; it reads NFTVAIDFTA…VQFVPFRDYI (202 aa).

This sequence belongs to the copine family. Ca(2+) is required as a cofactor.

In terms of biological role, probable calcium-dependent phospholipid-binding protein that may play a role in calcium-mediated intracellular processes. The sequence is that of Copine-8 from Mus musculus (Mouse).